The chain runs to 210 residues: DNA replication complex GINS protein PSF3 (210 aa).

This sequence belongs to the GINS3/PSF3 family. As to quaternary structure, component of the GINS complex which is a heterotetramer of gins1/psf1, gins2/psf2, gins3/psf3 and gins4/sld5. Component of the CMG helicase complex, composed of the mcm2-7 complex, the GINS complex and cdc45.

The protein resides in the nucleus. Its subcellular location is the chromosome. Its function is as follows. Required for correct functioning of the GINS complex, a complex that plays an essential role in the initiation of DNA replication, and progression of DNA replication forks. GINS complex is a core component of CDC45-MCM-GINS (CMG) helicase, the molecular machine that unwinds template DNA during replication, and around which the replisome is built. The sequence is that of DNA replication complex GINS protein PSF3 from Xenopus laevis (African clawed frog).